The primary structure comprises 133 residues: Small ribosomal subunit protein uS19 (133 aa).

It belongs to the universal ribosomal protein uS19 family.

Functionally, protein S19 forms a complex with S13 that binds strongly to the 16S ribosomal RNA. This is Small ribosomal subunit protein uS19 from Thermococcus onnurineus (strain NA1).